A 267-amino-acid polypeptide reads, in one-letter code: tRNA pseudouridine synthase A (267 aa).

The Nucleophile role is filled by aspartate 55. Residue tyrosine 111 coordinates substrate.

It belongs to the tRNA pseudouridine synthase TruA family.

The enzyme catalyses uridine(38/39/40) in tRNA = pseudouridine(38/39/40) in tRNA. Formation of pseudouridine at positions 38, 39 and 40 in the anticodon stem and loop of transfer RNAs. The polypeptide is tRNA pseudouridine synthase A (Thermococcus onnurineus (strain NA1)).